A 324-amino-acid chain; its full sequence is 2,3,4,5-tetrahydropyridine-2,6-dicarboxylate N-succinyltransferase (324 aa).

Mg(2+)-binding residues include Asp-173 and Glu-190. Catalysis depends on Glu-206, which acts as the Acyl-anhydride intermediate. Succinyl-CoA-binding positions include Arg-208, Gly-223, Ser-226, Ala-249, 264–265, Gly-272, Lys-284, and 297–300; these read EA and RRNS.

The protein belongs to the type 2 tetrahydrodipicolinate N-succinyltransferase family. Homotrimer.

It is found in the cytoplasm. It catalyses the reaction (S)-2,3,4,5-tetrahydrodipicolinate + succinyl-CoA + H2O = (S)-2-succinylamino-6-oxoheptanedioate + CoA. Its pathway is amino-acid biosynthesis; L-lysine biosynthesis via DAP pathway; LL-2,6-diaminopimelate from (S)-tetrahydrodipicolinate (succinylase route): step 1/3. Catalyzes the conversion of the cyclic tetrahydrodipicolinate (THDP) into the acyclic N-succinyl-L-2-amino-6-oxopimelate using succinyl-CoA. The polypeptide is 2,3,4,5-tetrahydropyridine-2,6-dicarboxylate N-succinyltransferase (Geodermatophilus obscurus (strain ATCC 25078 / DSM 43160 / JCM 3152 / CCUG 61914 / KCC A-0152 / KCTC 9177 / NBRC 13315 / NRRL B-3577 / G-20)).